Reading from the N-terminus, the 129-residue chain is Small ribosomal subunit protein uS9 (129 aa).

Belongs to the universal ribosomal protein uS9 family.

The protein is Small ribosomal subunit protein uS9 of Aliarcobacter butzleri (strain RM4018) (Arcobacter butzleri).